The primary structure comprises 230 residues: Potassium/proton antiporter CemA (230 aa).

Transmembrane regions (helical) follow at residues 7-27, 106-126, 145-165, and 181-201; these read LPSLLYLVFIVLLPWGVSSSF, IILHFSTNIICLAILSGSFFL, LNDSIKAFFILLVTDFFVGFH, and FGWAPNELIFTIFVCSFPVIL.

Belongs to the CemA family.

The protein localises to the plastid. It is found in the chloroplast inner membrane. The catalysed reaction is K(+)(in) + H(+)(out) = K(+)(out) + H(+)(in). In terms of biological role, contributes to K(+)/H(+) antiport activity by supporting proton efflux to control proton extrusion and homeostasis in chloroplasts in a light-dependent manner to modulate photosynthesis. Prevents excessive induction of non-photochemical quenching (NPQ) under continuous-light conditions. Indirectly promotes efficient inorganic carbon uptake into chloroplasts. In Hordeum vulgare (Barley), this protein is Potassium/proton antiporter CemA.